The primary structure comprises 529 residues: Bifunctional purine biosynthesis protein PurH (529 aa).

The MGS-like domain maps to 1 to 148 (MQQRRPVRRA…KNHKDVAIVV (148 aa)). K287 is modified (N6-acetyllysine).

The protein belongs to the PurH family.

The enzyme catalyses (6R)-10-formyltetrahydrofolate + 5-amino-1-(5-phospho-beta-D-ribosyl)imidazole-4-carboxamide = 5-formamido-1-(5-phospho-D-ribosyl)imidazole-4-carboxamide + (6S)-5,6,7,8-tetrahydrofolate. It carries out the reaction IMP + H2O = 5-formamido-1-(5-phospho-D-ribosyl)imidazole-4-carboxamide. It participates in purine metabolism; IMP biosynthesis via de novo pathway; 5-formamido-1-(5-phospho-D-ribosyl)imidazole-4-carboxamide from 5-amino-1-(5-phospho-D-ribosyl)imidazole-4-carboxamide (10-formyl THF route): step 1/1. Its pathway is purine metabolism; IMP biosynthesis via de novo pathway; IMP from 5-formamido-1-(5-phospho-D-ribosyl)imidazole-4-carboxamide: step 1/1. This chain is Bifunctional purine biosynthesis protein PurH, found in Escherichia coli (strain SMS-3-5 / SECEC).